A 330-amino-acid polypeptide reads, in one-letter code: Beta-ketoacyl-[acyl-carrier-protein] synthase III (330 aa).

Catalysis depends on residues Cys115 and His255. An ACP-binding region spans residues 256–260 (QANFR). Asn285 is a catalytic residue.

Belongs to the thiolase-like superfamily. FabH family. As to quaternary structure, homodimer.

The protein localises to the cytoplasm. The enzyme catalyses malonyl-[ACP] + acetyl-CoA + H(+) = 3-oxobutanoyl-[ACP] + CO2 + CoA. It participates in lipid metabolism; fatty acid biosynthesis. Functionally, catalyzes the condensation reaction of fatty acid synthesis by the addition to an acyl acceptor of two carbons from malonyl-ACP. Catalyzes the first condensation reaction which initiates fatty acid synthesis and may therefore play a role in governing the total rate of fatty acid production. Possesses both acetoacetyl-ACP synthase and acetyl transacylase activities. Its substrate specificity determines the biosynthesis of branched-chain and/or straight-chain of fatty acids. In Helicobacter pylori (strain P12), this protein is Beta-ketoacyl-[acyl-carrier-protein] synthase III.